Here is a 525-residue protein sequence, read N- to C-terminus: Estrogen receptor (525 aa).

Residues 1-59 (PTSPLVFVPSSPRLSPFMHPPSHHYLETTSTPVYRSSVSSSQQQLSREDQCGTSDDSYS) are disordered. The segment at 1 to 82 (PTSPLVFVPS…GFEMAKEMRF (82 aa)) is modulating. Low complexity predominate over residues 36 to 45 (SSVSSSQQQL). 2 consecutive NR C4-type zinc fingers follow at residues 83–103 (CAVC…CEGC) and 119–143 (CPAT…LRKC). Residues 83–148 (CAVCSDYASG…RLRKCYQVGM (66 aa)) constitute a DNA-binding region (nuclear receptor). Residues 149–209 (MKGGVRKDRG…GGGKSSIIGM (61 aa)) form a hinge region. The segment covering 154-182 (RKDRGRVLRRDKRRTGTSDKASKDLEHRT) has biased composition (basic and acidic residues). A disordered region spans residues 154 to 203 (RKDRGRVLRRDKRRTGTSDKASKDLEHRTAPPQDRRKHSSSSSSAGGGGK). The NR LBD domain maps to 210–446 (SPDQVLLLLQ…DLLLEMLDAH (237 aa)). Positions 452-465 (DRPAESWSQADREP) are enriched in basic and acidic residues. Residues 452–525 (DRPAESWSQA…GPRSDCTHIL (74 aa)) form a disordered region. Residues 479–493 (SGGGDGGPSSAGSGS) are compositionally biased toward gly residues.

Belongs to the nuclear hormone receptor family. NR3 subfamily. Binds DNA as a homodimer. Can form a heterodimer with ER-beta. Abundant in the liver, less abundant in the testes and barely detectable in the ovary and brain.

It localises to the nucleus. The steroid hormones and their receptors are involved in the regulation of eukaryotic gene expression and affect cellular proliferation and differentiation in target tissues. The protein is Estrogen receptor (esr1) of Micropogonias undulatus (Atlantic croaker).